The chain runs to 178 residues: ATP synthase subunit delta (178 aa).

Belongs to the ATPase delta chain family. F-type ATPases have 2 components, F(1) - the catalytic core - and F(0) - the membrane proton channel. F(1) has five subunits: alpha(3), beta(3), gamma(1), delta(1), epsilon(1). F(0) has three main subunits: a(1), b(2) and c(10-14). The alpha and beta chains form an alternating ring which encloses part of the gamma chain. F(1) is attached to F(0) by a central stalk formed by the gamma and epsilon chains, while a peripheral stalk is formed by the delta and b chains.

It is found in the cell inner membrane. Its function is as follows. F(1)F(0) ATP synthase produces ATP from ADP in the presence of a proton or sodium gradient. F-type ATPases consist of two structural domains, F(1) containing the extramembraneous catalytic core and F(0) containing the membrane proton channel, linked together by a central stalk and a peripheral stalk. During catalysis, ATP synthesis in the catalytic domain of F(1) is coupled via a rotary mechanism of the central stalk subunits to proton translocation. This protein is part of the stalk that links CF(0) to CF(1). It either transmits conformational changes from CF(0) to CF(1) or is implicated in proton conduction. In Pelodictyon phaeoclathratiforme (strain DSM 5477 / BU-1), this protein is ATP synthase subunit delta.